We begin with the raw amino-acid sequence, 1332 residues long: Sister chromatid cohesion protein PDS5 homolog A (1332 aa).

At Met-1 the chain carries N-acetylmethionine. Residues 392-428 form an HEAT repeat; that stretch reads ALVNDQLLGFVRERTLDKRWRVRKEAMMGLAQLYKKY. Ser-1096 bears the Phosphoserine mark. Residues 1138-1332 form a disordered region; it reads GVLGTVNKPL…PAERQIDLQR (195 aa). Lys-1145 is modified (N6-acetyllysine). Residues 1160 to 1173 are compositionally biased toward polar residues; sequence GTETGSNINANSEL. Ser-1174 and Ser-1194 each carry phosphoserine. At Thr-1207 the chain carries Phosphothreonine. An N6-acetyllysine modification is found at Lys-1210. Residues 1222–1232 are compositionally biased toward polar residues; that stretch reads SDQSTQGNISS. N6-acetyllysine is present on Lys-1288. Ser-1303 is modified (phosphoserine). The span at 1316-1332 shows a compositional bias: basic and acidic residues; that stretch reads DGAKKAVPAERQIDLQR.

It belongs to the PDS5 family. In terms of assembly, interacts with the cohesin complex. Interacts with WAPL (via FGF motifs) or CDCA5 (via the FGF motif); the interaction is direct, cohesin-dependent and competitive. Interacts with SMC3. Interacts with TP63.

The protein localises to the nucleus. Functionally, probable regulator of sister chromatid cohesion in mitosis which may stabilize cohesin complex association with chromatin. May couple sister chromatid cohesion during mitosis to DNA replication. Cohesion ensures that chromosome partitioning is accurate in both meiotic and mitotic cells and plays an important role in DNA repair. In Mus musculus (Mouse), this protein is Sister chromatid cohesion protein PDS5 homolog A (Pds5a).